The sequence spans 181 residues: Translation initiation factor IF-3 (181 aa).

This sequence belongs to the IF-3 family. In terms of assembly, monomer.

Its subcellular location is the cytoplasm. Its function is as follows. IF-3 binds to the 30S ribosomal subunit and shifts the equilibrium between 70S ribosomes and their 50S and 30S subunits in favor of the free subunits, thus enhancing the availability of 30S subunits on which protein synthesis initiation begins. This chain is Translation initiation factor IF-3, found in Pseudoalteromonas translucida (strain TAC 125).